Here is a 416-residue protein sequence, read N- to C-terminus: 4-hydroxy-3-methylbut-2-en-1-yl diphosphate synthase (flavodoxin) (416 aa).

C304, C307, C350, and E357 together coordinate [4Fe-4S] cluster.

This sequence belongs to the IspG family. [4Fe-4S] cluster serves as cofactor.

The enzyme catalyses (2E)-4-hydroxy-3-methylbut-2-enyl diphosphate + oxidized [flavodoxin] + H2O + 2 H(+) = 2-C-methyl-D-erythritol 2,4-cyclic diphosphate + reduced [flavodoxin]. It participates in isoprenoid biosynthesis; isopentenyl diphosphate biosynthesis via DXP pathway; isopentenyl diphosphate from 1-deoxy-D-xylulose 5-phosphate: step 5/6. In terms of biological role, converts 2C-methyl-D-erythritol 2,4-cyclodiphosphate (ME-2,4cPP) into 1-hydroxy-2-methyl-2-(E)-butenyl 4-diphosphate. This is 4-hydroxy-3-methylbut-2-en-1-yl diphosphate synthase (flavodoxin) from Rhizobium johnstonii (strain DSM 114642 / LMG 32736 / 3841) (Rhizobium leguminosarum bv. viciae).